The primary structure comprises 349 residues: MSSNTASSSAGAAGSGDSSAARKNSKRPKYSKFTQQELPACKPILTPGWVISTFLIVSVIFIPLGVISLFASQDVVEIVDRYDTECIPAPARTNKVAYIQGDGDKVCNRDLKVTKRMKQPIYVYYQLENFYQNHRRYVKSRSDSQLRSTKYENQISACKPEDDVGGQPIVPCGLIAWSLFNDTYALSRNNVSLAVNKKGIAWKSDKEHKFGNKVFPKNFQKGNITGGATLDPRIPLSEQEDLIVWMRTAALPTFRKLYGKIESDLEMGDTIHVKLNNNYNTYSFNGKKKLVLSTTSWLGGKNDFLGIAYLTVGGICFILALAFTIMYLVKPRRLGDPSYLSWNRNPGGR.

Positions 1–21 (MSSNTASSSAGAAGSGDSSAA) are enriched in low complexity. Positions 1–30 (MSSNTASSSAGAAGSGDSSAARKNSKRPKY) are disordered. Ser-2 is modified (N-acetylserine). Residues 50–70 (VISTFLIVSVIFIPLGVISLF) form a helical membrane-spanning segment. Residues Asn-181, Asn-190, and Asn-223 are each glycosylated (N-linked (GlcNAc...) asparagine). A helical membrane pass occupies residues 305 to 325 (LGIAYLTVGGICFILALAFTI).

It belongs to the CDC50/LEM3 family. As to quaternary structure, interacts with ALA2 and ALA3 in a heterologous system. In terms of tissue distribution, expressed in roots, leaves, stems, flowers and siliques.

Its subcellular location is the golgi apparatus membrane. It is found in the prevacuolar compartment membrane. It localises to the endoplasmic reticulum membrane. Its function is as follows. Required for the lipid transport activity of the ALA/ALIS P4-ATPase complex. This is ALA-interacting subunit 3 (ALIS3) from Arabidopsis thaliana (Mouse-ear cress).